A 464-amino-acid chain; its full sequence is MPLHSKNAVRDDLLDDIYSSADLSLSMPKYKMPEQEHDPRHAYQVIHDELMMDGNSRQNLATFCQTWVEDEVHKLMDECIDKNMIDKDEYPQTAELESRCVHMLADLWNSPDAENTLGCSTTGSSEAAMLGGMALKWAWREKMKKLGKPTDKPNMICGPVQVCWHKFARYWDIELREIPMEGDRLIMTPEEVIKRCDENTIGVVPTLGVTFTCQYEPVKAVHEALDKLQEETGLDIPMHIDAASGGFLAPFCDPDLEWDFRLPRVKSINASGHKFGLSPLGVGWVIWRDASALHEDLIFNVNYLGGNMPTFALNFSRPGGQIVAQYYNFLRLGKEGYRKIHQACYDTAVYLSSEIEKLGMFEIIYDGKGGIPAMSWSLKEGVDPGFNLFDLSDRIRSRGWQIAAYAMPPKREDLVIMRILVRHGFSRDQADLLVADLKHCVEFFAKHPISHGSDELESSGFNHG.

Residue K274 is modified to N6-(pyridoxal phosphate)lysine.

It belongs to the group II decarboxylase family. Requires pyridoxal 5'-phosphate as cofactor.

The catalysed reaction is L-glutamate + H(+) = 4-aminobutanoate + CO2. In terms of biological role, catalyzes the pyridoxal-dependent decarboxylation of glutamate to produce 4-aminobutanoate. Has weak activity with aspartate, but cannot complement an E.coli panD deletion mutant. This chain is Glutamate decarboxylase, found in Aliivibrio fischeri (strain ATCC 700601 / ES114) (Vibrio fischeri).